The following is a 192-amino-acid chain: Imidazoleglycerol-phosphate dehydratase (192 aa).

It belongs to the imidazoleglycerol-phosphate dehydratase family.

It is found in the cytoplasm. It carries out the reaction D-erythro-1-(imidazol-4-yl)glycerol 3-phosphate = 3-(imidazol-4-yl)-2-oxopropyl phosphate + H2O. It functions in the pathway amino-acid biosynthesis; L-histidine biosynthesis; L-histidine from 5-phospho-alpha-D-ribose 1-diphosphate: step 6/9. The sequence is that of Imidazoleglycerol-phosphate dehydratase from Carboxydothermus hydrogenoformans (strain ATCC BAA-161 / DSM 6008 / Z-2901).